We begin with the raw amino-acid sequence, 479 residues long: MEKKQKVVVVGAGPVGSLAALYAANRGDDVEIYELRSDLRDPTTTPLNFTKSINLALSERGINAMRHAGQPKLIEHVMGATIPMHGRMIHGKRANGDLFEESQNYDVYGRSILAVDRGRLNERLLDILEAMPNVTFFFNHKLTGADFRKNKAWFEVRDKTGAAQGQQSREIEVKFDLMIGTDGAHSAVRYHMMKYTRMDYEQVYIDTMWCEFQIQPKTVVPDAPLDSKFSISPNHLHIWPGKEFMFIAIPSDDGSFTCTLFAPATLYEHLESDRTGSLVPPFFDKYFPGVTTLIPPTELIDSFHRNPHLPLISIKCKPHHYGSSVVILGDAAHAMVPFYGQGMNAGLEDVRILFDILDKHARMDELSACADRAVSREHALAEYTAVRVPDAHAINDLALQNYVEMRASVLSPVYRLRKFLEEALSKYVPSLGWQTKYARVSFGNERYSEVVAKSEHQGKMLVRGIGILSCRVGRALHNE.

This sequence belongs to the aromatic-ring hydroxylase family. KMO subfamily. The cofactor is FAD.

It localises to the mitochondrion outer membrane. The enzyme catalyses L-kynurenine + NADPH + O2 + H(+) = 3-hydroxy-L-kynurenine + NADP(+) + H2O. It participates in cofactor biosynthesis; NAD(+) biosynthesis; quinolinate from L-kynurenine: step 1/3. Its function is as follows. Catalyzes the hydroxylation of L-kynurenine (L-Kyn) to form 3-hydroxy-L-kynurenine (L-3OHKyn). Required for synthesis of quinolinic acid. In Chaetomium globosum (strain ATCC 6205 / CBS 148.51 / DSM 1962 / NBRC 6347 / NRRL 1970) (Soil fungus), this protein is Kynurenine 3-monooxygenase.